Here is a 388-residue protein sequence, read N- to C-terminus: Glutamine transporter 2 (388 aa).

The next 11 helical transmembrane spans lie at 5 to 27 (LFGSALILSGTALGAGMLAIPMV), 31 to 53 (FGLFYSTLLMLIICAGTTYAALL), 86 to 106 (LFYLLLFCMLIAYILGAADLI), 121 to 141 (FAQVAFTLFASAFVVCGTQII), 147 to 167 (LLFFFMISMLVLTLIILIPGM), 186 to 206 (TSTILFTSFASMPVIPSLVAY), 218 to 238 (MVILGSIIPLICYLVWLYAVV), 268 to 288 (IILSIFTSLALLTSFLGVAMA), 302 to 322 (IVTYVCTFILPLLGAGLAADQ), 326 to 346 (VLGYAGVILVFLAIFIPLAMV), and 368 to 388 (GGKLALGLTLLFGLLLLISQI).

Belongs to the amino acid/polyamine transporter 2 family.

The protein resides in the cell inner membrane. Its function is as follows. Seems to be involved in glutamine transport. Complements an E.coli glnP deletion mutant. In Aliivibrio fischeri (strain ATCC 700601 / ES114) (Vibrio fischeri), this protein is Glutamine transporter 2.